Reading from the N-terminus, the 605-residue chain is Elongation factor 4 (605 aa).

The region spanning 9–192 (GMIRNFCIIA…AIVARVPAPA (184 aa)) is the tr-type G domain. GTP-binding positions include 21 to 26 (DHGKST) and 139 to 142 (NKID).

Belongs to the TRAFAC class translation factor GTPase superfamily. Classic translation factor GTPase family. LepA subfamily.

Its subcellular location is the cell inner membrane. The enzyme catalyses GTP + H2O = GDP + phosphate + H(+). Required for accurate and efficient protein synthesis under certain stress conditions. May act as a fidelity factor of the translation reaction, by catalyzing a one-codon backward translocation of tRNAs on improperly translocated ribosomes. Back-translocation proceeds from a post-translocation (POST) complex to a pre-translocation (PRE) complex, thus giving elongation factor G a second chance to translocate the tRNAs correctly. Binds to ribosomes in a GTP-dependent manner. In Chlorobaculum tepidum (strain ATCC 49652 / DSM 12025 / NBRC 103806 / TLS) (Chlorobium tepidum), this protein is Elongation factor 4.